The sequence spans 215 residues: Late embryogenesis abundant protein 14 (215 aa).

2 disordered regions span residues 1–129 (MASQ…GQTG) and 190–215 (SGDNKNNAAAGKDTSTYKPGTGSDYQ). Basic and acidic residues-rich tracts occupy residues 13-24 (GETKARAEEKTG), 32-41 (EKAREAKDTA), 54-81 (GAKEATKEKAYETKDATKEKAYEAKDAA), and 88-111 (AMDKGRGAAGATRDKAYDAKDRAA). Positions 192–215 (DNKNNAAAGKDTSTYKPGTGSDYQ) are enriched in polar residues.

This sequence belongs to the LEA type 4 family. As to expression, expressed in the shoot apex and leaves. Expressed in dry seeds. Expressed in roots and leaves.

It localises to the nucleus. The polypeptide is Late embryogenesis abundant protein 14 (Oryza sativa subsp. japonica (Rice)).